A 280-amino-acid polypeptide reads, in one-letter code: Diaminopimelate epimerase (280 aa).

Residues Asn11 and Asn62 each coordinate substrate. Residue Cys71 is the Proton donor of the active site. Substrate is bound by residues 72–73 (GN), Asn160, Asn193, and 211–212 (ER). Cys220 acts as the Proton acceptor in catalysis. A substrate-binding site is contributed by 221-222 (GT).

This sequence belongs to the diaminopimelate epimerase family. Homodimer.

The protein localises to the cytoplasm. It carries out the reaction (2S,6S)-2,6-diaminopimelate = meso-2,6-diaminopimelate. The protein operates within amino-acid biosynthesis; L-lysine biosynthesis via DAP pathway; DL-2,6-diaminopimelate from LL-2,6-diaminopimelate: step 1/1. Its function is as follows. Catalyzes the stereoinversion of LL-2,6-diaminopimelate (L,L-DAP) to meso-diaminopimelate (meso-DAP), a precursor of L-lysine and an essential component of the bacterial peptidoglycan. The polypeptide is Diaminopimelate epimerase (Acetivibrio thermocellus (strain ATCC 27405 / DSM 1237 / JCM 9322 / NBRC 103400 / NCIMB 10682 / NRRL B-4536 / VPI 7372) (Clostridium thermocellum)).